The primary structure comprises 1028 residues: Sporulation-specific protein 3 (1028 aa).

It localises to the prospore membrane. In terms of biological role, has a role in spore morphogenesis. Involved in the assembly of the forespore membrane. The chain is Sporulation-specific protein 3 (spo3) from Schizosaccharomyces pombe (strain 972 / ATCC 24843) (Fission yeast).